The sequence spans 101 residues: Vacuolar ATPase assembly integral membrane protein VMA21 (101 aa).

Over 1 to 25 (MERLDKAALNALQPSDFRNESSLAS) the chain is Cytoplasmic. A helical membrane pass occupies residues 26-46 (TLKTLLFFTALMITVPIGLYF). Over 47-65 (TTKSYVFEGAFGMSNRDSY) the chain is Lumenal. Residues 66–86 (FYAAIVAVVAVHVVLALFVYV) traverse the membrane as a helical segment. Residues 87-101 (AWNEGSRQWREGKQD) lie on the Cytoplasmic side of the membrane.

The protein belongs to the VMA21 family. Associates with the V0 complex of the vacuolar ATPase (V-ATPase). Interacts with ATP6AP2.

It localises to the endoplasmic reticulum membrane. The protein resides in the endoplasmic reticulum-Golgi intermediate compartment membrane. Its subcellular location is the cytoplasmic vesicle. The protein localises to the COPII-coated vesicle membrane. In terms of biological role, required for the assembly of the V0 complex of the vacuolar ATPase (V-ATPase) in the endoplasmic reticulum. In Bos taurus (Bovine), this protein is Vacuolar ATPase assembly integral membrane protein VMA21.